Here is a 159-residue protein sequence, read N- to C-terminus: Putative viral CXC chemokine 2 (159 aa).

2 disulfide bridges follow: Cys-50/Cys-77 and Cys-52/Cys-93.

This sequence belongs to the intercrine alpha (chemokine CxC) family.

The polypeptide is Putative viral CXC chemokine 2 (UL147) (Human cytomegalovirus (strain Towne) (HHV-5)).